The sequence spans 634 residues: Chaperone protein HtpG (634 aa).

The interval 1 to 342 (MTVDTDKQTL…SSDLSLNVSR (342 aa)) is a; substrate-binding. Residues 343 to 559 (EILQSGPVVD…QGDLGLQMRQ (217 aa)) form a b region. The interval 560–634 (LLEASGQAVP…LNKLLLELSV (75 aa)) is c.

It belongs to the heat shock protein 90 family. Homodimer.

The protein localises to the cytoplasm. Molecular chaperone. Has ATPase activity. This is Chaperone protein HtpG from Xanthomonas oryzae pv. oryzae (strain MAFF 311018).